Here is a 127-residue protein sequence, read N- to C-terminus: Large ribosomal subunit protein bL17 (127 aa).

This sequence belongs to the bacterial ribosomal protein bL17 family. In terms of assembly, part of the 50S ribosomal subunit. Contacts protein L32.

The sequence is that of Large ribosomal subunit protein bL17 from Vibrio vulnificus (strain CMCP6).